The following is a 312-amino-acid chain: NADH-ubiquinone oxidoreductase chain 1 (312 aa).

A run of 8 helical transmembrane segments spans residues 3–23, 37–57, 69–89, 104–124, 141–161, 173–193, 233–253, and 279–299; these read FMELLLFVLSMLLAVAFLTVA, PNAVGYYGVLMAMADAAKLLL, FMLIMSPMMTLMSALLCWAMI, FMLALAMGSVGVFGSLFAGWA, LISYELVLTTVILICMLLTGT, SMWLVVPLLPLSLMWFMGCVA, MLFYSTLTAILFFGGGTGLIL, and LIAMCWIVFLPLLFALALFMP.

This sequence belongs to the complex I subunit 1 family.

Its subcellular location is the mitochondrion inner membrane. The catalysed reaction is a ubiquinone + NADH + 5 H(+)(in) = a ubiquinol + NAD(+) + 4 H(+)(out). Core subunit of the mitochondrial membrane respiratory chain NADH dehydrogenase (Complex I) that is believed to belong to the minimal assembly required for catalysis. Complex I functions in the transfer of electrons from NADH to the respiratory chain. The immediate electron acceptor for the enzyme is believed to be ubiquinone. This chain is NADH-ubiquinone oxidoreductase chain 1 (ND1), found in Debaryomyces hansenii (strain ATCC 36239 / CBS 767 / BCRC 21394 / JCM 1990 / NBRC 0083 / IGC 2968) (Yeast).